Consider the following 188-residue polypeptide: Large ribosomal subunit protein eL18 (188 aa).

Lys-119 is covalently cross-linked (Glycyl lysine isopeptide (Lys-Gly) (interchain with G-Cter in SUMO2)). Position 130 is a phosphoserine (Ser-130). Residues 150-188 (RHFGKAPGTPHSHTKPYVRSKGRKFERARGRRASRGYKN) form a disordered region. Thr-158 is subject to Phosphothreonine. 2 stretches are compositionally biased toward basic residues: residues 161 to 171 (SHTKPYVRSKG) and 178 to 188 (RGRRASRGYKN). A Glycyl lysine isopeptide (Lys-Gly) (interchain with G-Cter in SUMO2) cross-link involves residue Lys-164.

Belongs to the eukaryotic ribosomal protein eL18 family. In terms of assembly, component of the large ribosomal subunit.

It is found in the cytoplasm. The protein localises to the cytosol. It localises to the rough endoplasmic reticulum. Its function is as follows. Component of the large ribosomal subunit. The ribosome is a large ribonucleoprotein complex responsible for the synthesis of proteins in the cell. The protein is Large ribosomal subunit protein eL18 (Rpl18) of Rattus norvegicus (Rat).